The primary structure comprises 73 residues: Dermaseptin-1 (73 aa).

Positions 1–22 (MAFLKKSIFLALFLGMVSLSIC) are cleaved as a signal peptide. Positions 23–43 (EEEKRENEGEEEQEDDEQSEM) are cleaved as a propeptide — removed in mature form. The interval 25-46 (EKRENEGEEEQEDDEQSEMKRG) is disordered. The span at 30–40 (EGEEEQEDDEQ) shows a compositional bias: acidic residues. Leu70 bears the Leucine amide mark. Residues 72-73 (EQ) constitute a propeptide, removed in mature form.

As to expression, expressed by the skin glands.

It is found in the secreted. Has antiparasitic activity against trypomastigote form of T.cruzi (IC(50)=0.68 uM) in vitro but not against L.infantum. Probably acts by permeabilizing cell membranes. In vitro, shows no cytotoxicity against macrophages. Has antibacterial activity. This Pithecopus nordestinus (Northeastern Brazilian leaf frog) protein is Dermaseptin-1.